The following is a 92-amino-acid chain: Elongation factor 1-beta (92 aa).

The protein belongs to the EF-1-beta/EF-1-delta family.

Promotes the exchange of GDP for GTP in EF-1-alpha/GDP, thus allowing the regeneration of EF-1-alpha/GTP that could then be used to form the ternary complex EF-1-alpha/GTP/AAtRNA. In Hyperthermus butylicus (strain DSM 5456 / JCM 9403 / PLM1-5), this protein is Elongation factor 1-beta.